We begin with the raw amino-acid sequence, 367 residues long: Glutamate 5-kinase (367 aa).

Lys-9 contacts ATP. Residues Ser-49, Asp-136, and Asn-148 each contribute to the substrate site. ATP-binding positions include 168–169 and 210–216; these read TD and TGGMKSK. Positions 276 to 350 constitute a PUA domain; sequence SGQIEVDAGA…GMQSQDIQAR (75 aa).

The protein belongs to the glutamate 5-kinase family.

The protein localises to the cytoplasm. The enzyme catalyses L-glutamate + ATP = L-glutamyl 5-phosphate + ADP. It functions in the pathway amino-acid biosynthesis; L-proline biosynthesis; L-glutamate 5-semialdehyde from L-glutamate: step 1/2. Catalyzes the transfer of a phosphate group to glutamate to form L-glutamate 5-phosphate. This Bacillus mycoides (strain KBAB4) (Bacillus weihenstephanensis) protein is Glutamate 5-kinase.